Consider the following 89-residue polypeptide: Serine-rich and transmembrane domain-containing 2 (89 aa).

The N-linked (GlcNAc...) asparagine glycan is linked to N11. Residues 38-58 form a helical membrane-spanning segment; sequence YVGLFLSLLAILLILLFTMLL.

It localises to the membrane. This is Serine-rich and transmembrane domain-containing 2 from Mus musculus (Mouse).